We begin with the raw amino-acid sequence, 96 residues long: Citrate lyase acyl carrier protein (96 aa).

Residue Ser14 is modified to O-(phosphoribosyl dephospho-coenzyme A)serine.

Belongs to the CitD family. In terms of assembly, oligomer with a subunit composition of (alpha,beta,gamma)6.

The protein localises to the cytoplasm. Its function is as follows. Covalent carrier of the coenzyme of citrate lyase. The protein is Citrate lyase acyl carrier protein of Pectobacterium atrosepticum (strain SCRI 1043 / ATCC BAA-672) (Erwinia carotovora subsp. atroseptica).